The primary structure comprises 516 residues: Putative fatty acyl-CoA reductase CG8306 (516 aa).

A run of 3 helical transmembrane segments spans residues 356–376 (WVFR…LDLV), 471–491 (ILLG…FKLI), and 496–516 (GIST…FGLL).

This sequence belongs to the fatty acyl-CoA reductase family.

The protein localises to the membrane. The catalysed reaction is a long-chain fatty acyl-CoA + 2 NADPH + 2 H(+) = a long-chain primary fatty alcohol + 2 NADP(+) + CoA. Its function is as follows. Catalyzes the reduction of C16 or C18 fatty acyl-CoA to fatty alcohols. The chain is Putative fatty acyl-CoA reductase CG8306 from Drosophila melanogaster (Fruit fly).